Here is a 156-residue protein sequence, read N- to C-terminus: Small ribosomal subunit protein uS7 (156 aa).

The protein belongs to the universal ribosomal protein uS7 family. As to quaternary structure, part of the 30S ribosomal subunit. Contacts proteins S9 and S11.

In terms of biological role, one of the primary rRNA binding proteins, it binds directly to 16S rRNA where it nucleates assembly of the head domain of the 30S subunit. Is located at the subunit interface close to the decoding center, probably blocks exit of the E-site tRNA. The sequence is that of Small ribosomal subunit protein uS7 from Thermoanaerobacter pseudethanolicus (strain ATCC 33223 / 39E) (Clostridium thermohydrosulfuricum).